Here is a 493-residue protein sequence, read N- to C-terminus: MSQSLEEKSVQERTRIKNSRYESGVIPYAKMGYWNPDYQVKDTDVLALFRVTPQPGVDPIEAAAAVAGESSTATWTVVWTDLLTAADLYRAKAYKVDQVPNNPEQYFAYIAYELDLFEEGSIANLTASIIGNVFGFKAVKALRLEDMRLPFAYIKTFQGPATGVILERERLDKFGRPLLGCTTKPKLGLSGKNYGRVVYEALKGGLDFVKDDENINSQPFMRWRERYLFVMEAVNKAAAATGEVKGHYLNVTAATMEEMYARAQLAKELGSVIIMIDLVIGYTAIQTMAKWARDNDMILHLHRAGNSTYSRQKNHGMNFRVICKWMRMAGVDHIHAGTVVGKLEGDPIITRGFYKTLLLPKLERNLQEGLFFDMDWASLRKVMPVASGGIHAGQMHQLIHYLGEDVVLQFGGGTIGHPDGIQSGATANRVALEAMILARNENRDFLTEGPEILREAAKNCGALRTALDLWKDITFNYTSTDTSDFVETPTANI.

Substrate is bound at residue Asn132. Residue Cys181 is modified to S-nitrosocysteine. Thr182 is a binding site for substrate. Lys184 functions as the Proton acceptor in the catalytic mechanism. Position 186 (Lys186) interacts with substrate. Mg(2+)-binding residues include Lys210, Asp212, and Glu213. At Lys210 the chain carries N6-carboxylysine. His302 serves as the catalytic Proton acceptor. Arg303, His335, and Ser387 together coordinate substrate. Cys460 bears the S-nitrosocysteine mark.

This sequence belongs to the RuBisCO large chain family. Type I subfamily. In terms of assembly, heterohexadecamer of 8 large chains and 8 small chains. Mg(2+) is required as a cofactor.

Its subcellular location is the plastid. The protein localises to the chloroplast. The catalysed reaction is 2 (2R)-3-phosphoglycerate + 2 H(+) = D-ribulose 1,5-bisphosphate + CO2 + H2O. The enzyme catalyses D-ribulose 1,5-bisphosphate + O2 = 2-phosphoglycolate + (2R)-3-phosphoglycerate + 2 H(+). RuBisCO catalyzes two reactions: the carboxylation of D-ribulose 1,5-bisphosphate, the primary event in carbon dioxide fixation, as well as the oxidative fragmentation of the pentose substrate in the photorespiration process. Both reactions occur simultaneously and in competition at the same active site. Carbon dioxide and oxygen bind in the same pocket of the enzyme in a similar manner. The protein is Ribulose bisphosphate carboxylase large chain of Galdieria sulphuraria (Red alga).